A 559-amino-acid chain; its full sequence is N-acetylglucosamine-6-sulfatase (559 aa).

The segment at 1–26 (MRFLSLAPDRPRRGGPRHLPSGSPAP) is disordered. A signal peptide spans 1-47 (MRFLSLAPDRPRRGGPRHLPSGSPAPPPPPPLLLLLLLGGCLGVSGA). Positions 62, 63, and 98 each coordinate Ca(2+). Cysteine 98 acts as the Nucleophile in catalysis. Cysteine 98 carries the post-translational modification 3-oxoalanine (Cys). Asparagine 118, asparagine 124, asparagine 190, asparagine 205, asparagine 217, asparagine 286, and asparagine 324 each carry an N-linked (GlcNAc...) asparagine glycan. The Ca(2+) site is built by aspartate 333 and asparagine 334. Residues asparagine 369, asparagine 394, asparagine 412, asparagine 429, asparagine 456, and asparagine 487 are each glycosylated (N-linked (GlcNAc...) asparagine). Serine 548 bears the Phosphoserine mark.

The protein belongs to the sulfatase family. The cofactor is Ca(2+). In terms of processing, processed by internal peptidase. The conversion to 3-oxoalanine (also known as C-formylglycine, FGly), of a serine or cysteine residue in prokaryotes and of a cysteine residue in eukaryotes, is critical for catalytic activity.

It is found in the lysosome. The catalysed reaction is Hydrolysis of the 6-sulfate groups of the N-acetyl-D-glucosamine 6-sulfate units of heparan sulfate and keratan sulfate.. Its function is as follows. Hydrolyzes 6-sulfate groups in N-acetyl-d-glucosaminide units of heparin sulfate and keratan sulfate. This is N-acetylglucosamine-6-sulfatase (GNS) from Capra hircus (Goat).